The chain runs to 413 residues: MADTPKEGKLTRFLDFTQLIDLASECVGGKVLFATDDFFGPAENLIKSNNPSFKENEYTEFGKWVDGWETRRKRIPGHDWCVIQLGIQGIIRGIDVDISYFSGNYAPRMSIQAANLSEDTVTNIPPRGVKMGAAATSEEFVAITELKSHSWDYLVPMSELKPGDPDSSHNYFFVNSQQRWTHIRLNIFPDGGVARLRVYGTGQRDWAALDSTEPVDLVAIAFGGVCVGFSNAHFGHPNNMIGVGDPKSIADGWETARRLDRPPVLEGNENGFLQVPGCEWAVFRLAHPGVITQIEIDTKYFKGNSPDSCKVDGCILTTLEEEDMIRQKWSLPAHKWKPLLPVTKLTPNQNHLLDSLTLELQDVITHARITIAPDGGVSRLRLKGFPSSICLLRPLREKPMLRFSLKAGFRANL.

This sequence belongs to the allantoicase family.

In terms of biological role, the function of this enzyme is unclear as allantoicase activity is not known to exist in mammals. This Rattus norvegicus (Rat) protein is Probable inactive allantoicase.